A 264-amino-acid chain; its full sequence is Enhancer of mRNA-decapping protein 1 (264 aa).

2 disordered regions span residues 1 to 180 and 193 to 264; these read MLAQ…FSTI and YNNP…LRDY. Residues 63-74 are compositionally biased toward basic residues; the sequence is GKKSTSKPKSKS. Polar residues predominate over residues 83-92; sequence NFKLTASPSL. Residues 108 to 118 are compositionally biased toward pro residues; that stretch reads PSPPPPPPPST. Low complexity-rich tracts occupy residues 119–134, 161–172, and 208–226; these read QPSTSTSTSPTPRTST, NGKKPNFFNNNN, and NNNNNNSSNNSNNSNNSNS. The segment covering 248 to 264 has biased composition (polar residues); sequence FKSNNGSPRQSSGLRDY.

It belongs to the EDC family.

It localises to the cytoplasm. In terms of biological role, mRNA-binding protein which stimulates mRNA decapping. This Candida albicans (strain SC5314 / ATCC MYA-2876) (Yeast) protein is Enhancer of mRNA-decapping protein 1 (EDC1).